Here is a 149-residue protein sequence, read N- to C-terminus: Large ribosomal subunit protein uL11 (149 aa).

It belongs to the universal ribosomal protein uL11 family. Part of the ribosomal stalk of the 50S ribosomal subunit. Interacts with L10 and the large rRNA to form the base of the stalk. L10 forms an elongated spine to which L12 dimers bind in a sequential fashion forming a multimeric L10(L12)X complex. One or more lysine residues are methylated.

Its function is as follows. Forms part of the ribosomal stalk which helps the ribosome interact with GTP-bound translation factors. The protein is Large ribosomal subunit protein uL11 of Xanthobacter autotrophicus (strain ATCC BAA-1158 / Py2).